Consider the following 165-residue polypeptide: Putative protein FAM86C2P (165 aa).

The protein belongs to the class I-like SAM-binding methyltransferase superfamily. EEF2KMT family.

This is Putative protein FAM86C2P (FAM86C2P) from Homo sapiens (Human).